The primary structure comprises 135 residues: Large ribosomal subunit protein uL16c (135 aa).

Belongs to the universal ribosomal protein uL16 family. Part of the 50S ribosomal subunit.

Its subcellular location is the plastid. It is found in the chloroplast. This chain is Large ribosomal subunit protein uL16c, found in Nandina domestica (Heavenly bamboo).